The primary structure comprises 548 residues: DNA-binding protein REPIN1 (548 aa).

The segment at 1-47 (MLERRCRGPTAMGPAHPWLFSGPSQESSQPNRGLRYQGKSVAQPGGP) is disordered. The segment covering 22-31 (GPSQESSQPN) has biased composition (polar residues). Ser27 carries the post-translational modification Phosphoserine. Lys39 bears the N6-acetyllysine mark. A C2H2-type 1; atypical zinc finger spans residues 53–75 (HRCAHCRKRFPGWVALWLHTRRC). 2 C2H2-type zinc fingers span residues 81–103 (LPCH…LQVH) and 112–134 (FICH…LRAH). The C2H2-type 4; atypical zinc-finger motif lies at 141–163 (ITCPECNKRFWRQKQLRAHLRRC). 11 consecutive C2H2-type zinc fingers follow at residues 173–195 (FICG…KRVH), 232–254 (FQCA…RRVH), 260–282 (HQCP…RRIH), 288–310 (YPCT…SKIH), 356–378 (HSCT…QRQH), 384–406 (FTCT…SRVH), 412–434 (FACE…RRDH), 440–462 (FVCP…RRIH), 468–490 (YVCP…RRIH), 496–518 (YACP…RKSH), and 524–546 (FCCA…QKKH). Lys272 is modified (N6-acetyllysine).

Homodimers and homomultimers. Found in a complex with RIP60 and RIP100. In terms of tissue distribution, expressed in the liver and in subcutaneous and visceral adipose tissue.

It is found in the nucleus. The protein localises to the cytoplasm. The protein resides in the cytosol. Functionally, sequence-specific double-stranded DNA-binding protein. Binds ATT-rich and T-rich DNA sequences and facilitates DNA bending. May regulate the expression of genes involved in cellular fatty acid import, including SCARB1/CD36, and genes involved in lipid droplet formation. May regulate the expression of LCN2, and thereby influence iron metabolism and apoptosis-related pathways. May regulate the expression of genes involved in glucose transport. In Rattus norvegicus (Rat), this protein is DNA-binding protein REPIN1 (Repin1).